The sequence spans 86 residues: Large ribosomal subunit protein bL27 (86 aa).

The segment covering 1–10 has biased composition (gly residues); it reads MAQKKGGGST. The segment at 1–21 is disordered; sequence MAQKKGGGSTRNGRDSESKRL.

The protein belongs to the bacterial ribosomal protein bL27 family.

In Ralstonia nicotianae (strain ATCC BAA-1114 / GMI1000) (Ralstonia solanacearum), this protein is Large ribosomal subunit protein bL27.